A 186-amino-acid chain; its full sequence is Pyridoxal 5'-phosphate synthase subunit PdxT (186 aa).

46–48 (GES) provides a ligand contact to L-glutamine. Cysteine 75 (nucleophile) is an active-site residue. Residues arginine 101 and 129 to 130 (IR) each bind L-glutamine. Catalysis depends on charge relay system residues histidine 165 and glutamate 167.

It belongs to the glutaminase PdxT/SNO family. In terms of assembly, in the presence of PdxS, forms a dodecamer of heterodimers. Only shows activity in the heterodimer.

It carries out the reaction aldehydo-D-ribose 5-phosphate + D-glyceraldehyde 3-phosphate + L-glutamine = pyridoxal 5'-phosphate + L-glutamate + phosphate + 3 H2O + H(+). The enzyme catalyses L-glutamine + H2O = L-glutamate + NH4(+). It participates in cofactor biosynthesis; pyridoxal 5'-phosphate biosynthesis. Its function is as follows. Catalyzes the hydrolysis of glutamine to glutamate and ammonia as part of the biosynthesis of pyridoxal 5'-phosphate. The resulting ammonia molecule is channeled to the active site of PdxS. This chain is Pyridoxal 5'-phosphate synthase subunit PdxT, found in Staphylococcus aureus (strain Mu3 / ATCC 700698).